A 103-amino-acid chain; its full sequence is Small ribosomal subunit protein uS10 (103 aa).

This sequence belongs to the universal ribosomal protein uS10 family. Part of the 30S ribosomal subunit.

Its function is as follows. Involved in the binding of tRNA to the ribosomes. The polypeptide is Small ribosomal subunit protein uS10 (Acidovorax sp. (strain JS42)).